A 384-amino-acid chain; its full sequence is S-adenosylmethionine synthase (384 aa).

His15 is a binding site for ATP. Asp17 contacts Mg(2+). K(+) is bound at residue Glu43. Residues Glu56 and Gln99 each coordinate L-methionine. Residues 99-109 form a flexible loop region; it reads QSPDINQGVDR. Residues 164–166, 231–232, Asp240, 246–247, Ala263, and Lys267 each bind ATP; these read DAK, RF, and RK. Residue Asp240 participates in L-methionine binding. Position 271 (Lys271) interacts with L-methionine.

It belongs to the AdoMet synthase family. In terms of assembly, homotetramer; dimer of dimers. Mg(2+) serves as cofactor. K(+) is required as a cofactor.

The protein localises to the cytoplasm. The enzyme catalyses L-methionine + ATP + H2O = S-adenosyl-L-methionine + phosphate + diphosphate. It participates in amino-acid biosynthesis; S-adenosyl-L-methionine biosynthesis; S-adenosyl-L-methionine from L-methionine: step 1/1. Functionally, catalyzes the formation of S-adenosylmethionine (AdoMet) from methionine and ATP. The overall synthetic reaction is composed of two sequential steps, AdoMet formation and the subsequent tripolyphosphate hydrolysis which occurs prior to release of AdoMet from the enzyme. The chain is S-adenosylmethionine synthase from Shewanella pealeana (strain ATCC 700345 / ANG-SQ1).